Here is a 234-residue protein sequence, read N- to C-terminus: MPKHGKKYRKATEGTEQIGLTVEQAVASAVEKAYAKFDETVDVAINLGVDPKYSDQMIRGAVTLPNGLGKEIRVACFVSGEKEAEAKEAGADFVGGDDLVAKVKDGWLDFDKAIATPDMMAKVGQIGRVLGPRGLMPNAKTGTVTFDVASAVKEVKAGRVEFKVDKAGVLHAPIGKVSFGAEKLLENLKSLLETVNKLKPSSAKGTYMKAVAVATTMGPGFKIDPLAARKYSES.

This sequence belongs to the universal ribosomal protein uL1 family. Part of the 50S ribosomal subunit.

Its function is as follows. Binds directly to 23S rRNA. The L1 stalk is quite mobile in the ribosome, and is involved in E site tRNA release. Functionally, protein L1 is also a translational repressor protein, it controls the translation of the L11 operon by binding to its mRNA. The sequence is that of Large ribosomal subunit protein uL1 from Maridesulfovibrio salexigens (strain ATCC 14822 / DSM 2638 / NCIMB 8403 / VKM B-1763) (Desulfovibrio salexigens).